Consider the following 164-residue polypeptide: UPF0304 protein YfbU (164 aa).

Belongs to the UPF0304 family.

In Escherichia coli O127:H6 (strain E2348/69 / EPEC), this protein is UPF0304 protein YfbU.